A 96-amino-acid chain; its full sequence is uncharacterized protein (96 aa).

This is an uncharacterized protein from Methanocaldococcus jannaschii (strain ATCC 43067 / DSM 2661 / JAL-1 / JCM 10045 / NBRC 100440) (Methanococcus jannaschii).